Consider the following 638-residue polypeptide: Chaperone protein DnaK (638 aa).

T198 is modified (phosphothreonine; by autocatalysis). The segment at 598–638 (YEASQKEAAEADAKADAAKDSDVVDADFEEIDEDDDKKKSA) is disordered. Residues 601-619 (SQKEAAEADAKADAAKDSD) are compositionally biased toward basic and acidic residues. Residues 620 to 632 (VVDADFEEIDEDD) are compositionally biased toward acidic residues.

The protein belongs to the heat shock protein 70 family.

Functionally, acts as a chaperone. This chain is Chaperone protein DnaK, found in Mesorhizobium japonicum (strain LMG 29417 / CECT 9101 / MAFF 303099) (Mesorhizobium loti (strain MAFF 303099)).